Consider the following 101-residue polypeptide: NAD(P)H-quinone oxidoreductase subunit 4L, chloroplastic (101 aa).

3 helical membrane-spanning segments follow: residues 2 to 22, 32 to 52, and 61 to 81; these read IFQSYLLIAASMFCIGLYGLL, MSLELLLNAVNLNLLTFSNFV, and VLALFVIALAAAEAAIGLAII.

It belongs to the complex I subunit 4L family. As to quaternary structure, NDH is composed of at least 16 different subunits, 5 of which are encoded in the nucleus.

It is found in the plastid. The protein localises to the chloroplast thylakoid membrane. The catalysed reaction is a plastoquinone + NADH + (n+1) H(+)(in) = a plastoquinol + NAD(+) + n H(+)(out). The enzyme catalyses a plastoquinone + NADPH + (n+1) H(+)(in) = a plastoquinol + NADP(+) + n H(+)(out). NDH shuttles electrons from NAD(P)H:plastoquinone, via FMN and iron-sulfur (Fe-S) centers, to quinones in the photosynthetic chain and possibly in a chloroplast respiratory chain. The immediate electron acceptor for the enzyme in this species is believed to be plastoquinone. Couples the redox reaction to proton translocation, and thus conserves the redox energy in a proton gradient. The polypeptide is NAD(P)H-quinone oxidoreductase subunit 4L, chloroplastic (Nephroselmis olivacea (Green alga)).